A 261-amino-acid chain; its full sequence is 3-deoxy-manno-octulosonate cytidylyltransferase 1 (261 aa).

The protein belongs to the KdsB family.

It is found in the cytoplasm. The enzyme catalyses 3-deoxy-alpha-D-manno-oct-2-ulosonate + CTP = CMP-3-deoxy-beta-D-manno-octulosonate + diphosphate. Its pathway is nucleotide-sugar biosynthesis; CMP-3-deoxy-D-manno-octulosonate biosynthesis; CMP-3-deoxy-D-manno-octulosonate from 3-deoxy-D-manno-octulosonate and CTP: step 1/1. It participates in bacterial outer membrane biogenesis; lipopolysaccharide biosynthesis. In terms of biological role, activates KDO (a required 8-carbon sugar) for incorporation into bacterial lipopolysaccharide in Gram-negative bacteria. In Burkholderia lata (strain ATCC 17760 / DSM 23089 / LMG 22485 / NCIMB 9086 / R18194 / 383), this protein is 3-deoxy-manno-octulosonate cytidylyltransferase 1.